Here is a 317-residue protein sequence, read N- to C-terminus: Melanocyte-stimulating hormone receptor (317 aa).

Topologically, residues 1–37 (MPAQGSQRGLLGAVNFTPTATPHLRPAANQTGPQCLE) are extracellular. N29 carries N-linked (GlcNAc...) asparagine glycosylation. Residues 38–63 (VSVPDGLFLCLGLVSLVENTLVVAAI) form a helical membrane-spanning segment. Topologically, residues 64–72 (AKNRNLHSP) are cytoplasmic. Residues 73–93 (MYCFICCLALSDLLVSVSNLL) traverse the membrane as a helical segment. Residues 94–118 (ETAVLLLLEVGALAAQATVVQQLGN) lie on the Extracellular side of the membrane. A helical membrane pass occupies residues 119 to 140 (VIDVLICSSMVSSLCSLGAIAM). At 141–163 (DRYISIFYALRYHSIVTLARARR) the chain is on the cytoplasmic side. A helical membrane pass occupies residues 164-183 (AIAAVWAASILSSTLFITYY). Residues 184-191 (DRTAALLC) lie on the Extracellular side of the membrane. The helical transmembrane segment at 192–211 (LVVFFLAMLVLMALLYVHML) threads the bilayer. At 212–240 (IQACQHAQAIARLHKRQHPVQQGWGLKGA) the chain is on the cytoplasmic side. The helical transmembrane segment at 241–266 (ATLTILLGVFFLCWGPFFLHLTLIAV) threads the bilayer. Over 267–279 (CPQHPTCSCIFKN) the chain is Extracellular. Residues 280–300 (FRLFLALIICNTIVDPLIYAF) traverse the membrane as a helical segment. The Cytoplasmic segment spans residues 301–317 (RSQELRRTLKEVLLFSW).

The protein belongs to the G-protein coupled receptor 1 family. In terms of assembly, interacts with MGRN1, but does not undergo MGRN1-mediated ubiquitination; this interaction competes with GNAS-binding and thus inhibits agonist-induced cAMP production. Interacts with OPN3; the interaction results in a decrease in MC1R-mediated cAMP signaling and ultimately a decrease in melanin production in melanocytes.

Its subcellular location is the cell membrane. Functionally, receptor for MSH (alpha, beta and gamma) and ACTH. The activity of this receptor is mediated by G proteins which activate adenylate cyclase. Mediates melanogenesis, the production of eumelanin (black/brown) and phaeomelanin (red/yellow), via regulation of cAMP signaling in melanocytes. The protein is Melanocyte-stimulating hormone receptor (MC1R) of Eulemur fulvus fulvus (Brown lemur).